The chain runs to 190 residues: Potassium-transporting ATPase KdpC subunit (190 aa).

Residues 13–33 (VGFLLLTLVCGVIYPGVVTII) form a helical membrane-spanning segment.

This sequence belongs to the KdpC family. The system is composed of three essential subunits: KdpA, KdpB and KdpC.

It localises to the cell membrane. Functionally, part of the high-affinity ATP-driven potassium transport (or Kdp) system, which catalyzes the hydrolysis of ATP coupled with the electrogenic transport of potassium into the cytoplasm. This subunit acts as a catalytic chaperone that increases the ATP-binding affinity of the ATP-hydrolyzing subunit KdpB by the formation of a transient KdpB/KdpC/ATP ternary complex. The protein is Potassium-transporting ATPase KdpC subunit of Listeria innocua serovar 6a (strain ATCC BAA-680 / CLIP 11262).